Consider the following 178-residue polypeptide: Probable inosine/xanthosine triphosphatase (178 aa).

It belongs to the YjjX NTPase family. Homodimer. The cofactor is Mg(2+). Mn(2+) serves as cofactor.

The catalysed reaction is XTP + H2O = XDP + phosphate + H(+). It catalyses the reaction ITP + H2O = IDP + phosphate + H(+). Phosphatase that hydrolyzes non-canonical purine nucleotides such as XTP and ITP to their respective diphosphate derivatives. Probably excludes non-canonical purines from DNA/RNA precursor pool, thus preventing their incorporation into DNA/RNA and avoiding chromosomal lesions. In Pyrobaculum calidifontis (strain DSM 21063 / JCM 11548 / VA1), this protein is Probable inosine/xanthosine triphosphatase.